Consider the following 62-residue polypeptide: Frontoxin III (62 aa).

4 disulfide bridges follow: C3/C24, C17/C41, C43/C54, and C55/C60.

Expressed by the venom gland.

Its subcellular location is the secreted. In terms of biological role, binds to muscle nicotinic acetylcholine receptor (nAChR) and inhibit acetylcholine from binding to the receptor, thereby impairing neuromuscular transmission. This Micrurus frontalis (Coral snake) protein is Frontoxin III.